Here is a 241-residue protein sequence, read N- to C-terminus: Uridylate kinase (241 aa).

15 to 18 (KLSG) contacts ATP. Gly-57 contacts UMP. Residues Gly-58 and Arg-62 each coordinate ATP. UMP-binding positions include Asp-77 and 139-146 (IGHTLFTT). The ATP site is built by Thr-166, Asn-167, Phe-172, and Asp-175.

This sequence belongs to the UMP kinase family. Homohexamer.

It is found in the cytoplasm. It catalyses the reaction UMP + ATP = UDP + ADP. Its pathway is pyrimidine metabolism; CTP biosynthesis via de novo pathway; UDP from UMP (UMPK route): step 1/1. Its activity is regulated as follows. Inhibited by UTP. Functionally, catalyzes the reversible phosphorylation of UMP to UDP. This is Uridylate kinase from Wigglesworthia glossinidia brevipalpis.